Consider the following 151-residue polypeptide: Transcriptional repressor NrdR (151 aa).

The tract at residues 1–24 (MRCPKCQHNGTRVLDSRPSDESRS) is disordered. A zinc finger lies at 3–34 (CPKCQHNGTRVLDSRPSDESRSIKRRRECEKC). The span at 14–24 (LDSRPSDESRS) shows a compositional bias: basic and acidic residues. Positions 49 to 139 (LLIIKKDGMR…VYRQFKDINV (91 aa)) constitute an ATP-cone domain.

This sequence belongs to the NrdR family. It depends on Zn(2+) as a cofactor.

Functionally, negatively regulates transcription of bacterial ribonucleotide reductase nrd genes and operons by binding to NrdR-boxes. This chain is Transcriptional repressor NrdR, found in Shouchella clausii (strain KSM-K16) (Alkalihalobacillus clausii).